Reading from the N-terminus, the 275-residue chain is MTVNISYLTDMDGVLIKEGEMIPGADRFLQSLTDNNVEFMVLTNNSIFTPRDLSARLKTSGLDIPPERIWTSATATAHFLKSQVKEGTAYVVGESGLTTALHTAGWILTDANPEFVVLGETRTYSFEAITTAINLILGGARFICTNPDVTGPSPSGILPATGSVAALITAATGAEPYYIGKPNPVMMRSALNTIGAHSEHTVMIGDRMDTDVKSGLEAGLSTVLVRSGISDDAEIRRYPFRPTHVINSIADLADCWDDPFGDGAFHVPDEQQFTD.

D10 functions as the Nucleophile in the catalytic mechanism. Mg(2+)-binding residues include D10, D12, and D206. Residue D12 is the Proton donor/acceptor of the active site.

Belongs to the HAD-like hydrolase superfamily. Homohexamer. Mg(2+) serves as cofactor.

It carries out the reaction dihydroxyacetone phosphate + H2O = dihydroxyacetone + phosphate. Its function is as follows. Catalyzes dephosphorylation of dihydroxyacetone phosphate (DHAP) to produce 1,3-dihydroxyacetone (DHA). Is the main enzyme responsible for DHA production from catabolism of sugars (glucose, fructose, and sucrose) in C.glutamicum. Displays no activity toward nucleoside monophosphates (AMP, CMP, GMP, or UMP). The protein is Dihydroxyacetone phosphatase of Corynebacterium glutamicum (strain R).